Reading from the N-terminus, the 133-residue chain is Large ribosomal subunit protein uL14 (133 aa).

It belongs to the universal ribosomal protein uL14 family. As to quaternary structure, part of the 50S ribosomal subunit. Forms a cluster with proteins L3 and L24e, part of which may contact the 16S rRNA in 2 intersubunit bridges.

Its function is as follows. Binds to 23S rRNA. Forms part of two intersubunit bridges in the 70S ribosome. This is Large ribosomal subunit protein uL14 from Methanopyrus kandleri (strain AV19 / DSM 6324 / JCM 9639 / NBRC 100938).